The chain runs to 474 residues: Equilibrative nucleoside transporter 3 (474 aa).

Over 1 to 53 the chain is Cytoplasmic; it reads MAIISEDDFRHTSNSTYRTASSSLRADQEALLEKLLDRPPPSLQRPEDRFNGT. Phosphoserine occurs at positions 21 and 23. Positions 31–32 match the Dileucine internalization motif motif; it reads LL. Residues 54–74 traverse the membrane as a helical segment; sequence YIIFFSLGIGGLLPWNFFVTA. The Extracellular portion of the chain corresponds to 75-105; the sequence is QEYWIFKLSNCSSPAAGEEPKDSDILNYFES. A glycan (N-linked (GlcNAc...) asparagine) is linked at N84. A helical membrane pass occupies residues 106 to 126; it reads YLAVASTVPSVLCLALNFLLV. The Cytoplasmic segment spans residues 127–134; sequence NRVPIRVR. The helical transmembrane segment at 135-155 threads the bilayer; that stretch reads VLASLTVMLAIFIVMTVLVKV. The Extracellular portion of the chain corresponds to 156–161; it reads DTSSWT. A helical membrane pass occupies residues 162 to 182; sequence HSFFTITITCMAILSGTSTIF. At 183-201 the chain is on the cytoplasmic side; sequence NSSVFGMTGSFPMRNSQAL. The chain crosses the membrane as a helical span at residues 202–222; it reads ISGGAMGGTLSAVASLVDLAV. Residues 223-230 are Extracellular-facing; the sequence is ASDVTDST. The chain crosses the membrane as a helical span at residues 231–251; the sequence is LAFFLTADIFLALCIGLYLLL. The Cytoplasmic portion of the chain corresponds to 252–305; sequence PRLDYARYYMKPVWPTVFSGEEQLPQDSPSPTSVAPGSSDPQTPPLGPILKKTT. A disordered region spans residues 272-294; that stretch reads EEQLPQDSPSPTSVAPGSSDPQT. The span at 276-292 shows a compositional bias: polar residues; sequence PQDSPSPTSVAPGSSDP. A helical membrane pass occupies residues 306 to 326; sequence GLGFCIIYLFFITSLIFPAIC. Residues 327–339 lie on the Extracellular side of the membrane; the sequence is TNIESLSKGSGSP. A helical membrane pass occupies residues 340-357; the sequence is WSTKFFVPLTTFLLYNFA. At 358–376 the chain is on the cytoplasmic side; it reads DLCGRQVTAWIQVPGPRSK. A helical membrane pass occupies residues 377 to 397; it reads ALPGLALLRTCFVPLFVFCNY. Residues 398 to 414 lie on the Extracellular side of the membrane; that stretch reads QPRGHLHTVLFQSDVYP. Residues 415–435 traverse the membrane as a helical segment; it reads VLFTSLLGLSNGYLSTLALIY. Residues 436–453 lie on the Cytoplasmic side of the membrane; the sequence is GPKIVPRELAEATGVVMT. Residues 454 to 474 traverse the membrane as a helical segment; the sequence is FYMGLGLVLGSACSALLVHLI.

Belongs to the SLC29A/ENT transporter (TC 2.A.57) family.

The protein resides in the lysosome membrane. It localises to the late endosome membrane. It is found in the mitochondrion membrane. The protein localises to the cell membrane. The catalysed reaction is adenosine(in) = adenosine(out). The enzyme catalyses guanosine(in) = guanosine(out). It catalyses the reaction inosine(in) = inosine(out). It carries out the reaction uridine(out) = uridine(in). The catalysed reaction is cytidine(in) = cytidine(out). The enzyme catalyses thymidine(in) = thymidine(out). It catalyses the reaction 2'-deoxyadenosine(in) = 2'-deoxyadenosine(out). It carries out the reaction 2'-deoxycytidine(in) = 2'-deoxycytidine(out). The catalysed reaction is guanine(out) = guanine(in). The enzyme catalyses uracil(in) = uracil(out). It catalyses the reaction (R)-noradrenaline(out) = (R)-noradrenaline(in). It carries out the reaction dopamine(out) = dopamine(in). The catalysed reaction is serotonin(out) = serotonin(in). The enzyme catalyses tyramine(in) = tyramine(out). It catalyses the reaction ATP(in) = ATP(out). Uniporter that mediates the facilitative transport of nucleoside across lysosomal and mitochondrial membranes. Functions as a non-electrogenic Na(+)-independent transporter. Substrate transport is pH-dependent and enhanced under acidic condition, probably reflecting the location of the transporter in acidic intracellular compartments. Proton is not a cotransporting ion but most likely change the ionization state of the transporter which dictates transport-permissible/impermissible conformation for nucleoside translocation. May direct the nucleoside transport from lysosomes to cytosol or cytosol to mitochondria to facilitate the fundamental function of salvage synthesis of nucleic acids. Involved in the transport of nucleosides (adenosine, guanosine, uridine, thymidine, cytidine and inosine) and deoxynucleosides (deoxyadenosine, deoxycytidine). Also mediates transport of purine nucleobases (adenine, guanine) and pyrimidine nucleobases (uracil). Also able to transport monoamine neurotransmitters dopamine, serotonin, noradrenaline and tyramine. Capable of transporting ATP. Mediates nucleoside export from lysosomes in macrophages, which regulates macrophage functions and numbers. The protein is Equilibrative nucleoside transporter 3 (SLC29A3) of Bos taurus (Bovine).